Consider the following 304-residue polypeptide: 5-hmdU DNA kinase 2 (304 aa).

Positions 260 to 304 (VGGQDPLAHRVPEKPQKASKTKNKAVAKEEPKTSSVSLLGLMRKA) are disordered. Residues 266-275 (LAHRVPEKPQ) show a composition bias toward basic and acidic residues.

This sequence belongs to the thymidylate kinase family. 5-hmdU DNA kinase subfamily.

It carries out the reaction 5-hydroxymethyl-dUMP in DNA + ATP = 5-phosphomethyl-dUMP in DNA + ADP + H(+). Its function is as follows. Phosphorylates 5-hydroxymethyluracil (5hmdU) into 5-phosphomethyl-2'-deoxyuridine (5- PmdU) on DNA as a step in the pathway leading to thymidine hypermodifications in the viral genome. The phosphate is added internally to the DNA polymer. As a final result of the pathway of hypermodification, 5-aminoethoxy-2'-deoxymethyluridine (5-NeOmdU) substitutes for about 40% of the thymidines in the viral DNA. These modifications probably prevent degradation of viral genome by the host restriction-modification antiviral defense system. This Salmonella typhi protein is 5-hmdU DNA kinase 2.